The sequence spans 2542 residues: Unconventional myosin-IXa (2542 aa).

The region spanning 14–112 (NEHTLRIYPG…YRFLLREKNL (99 aa)) is the Ras-associating domain. One can recognise a Myosin motor domain in the interval 146–1017 (KDFDDLCSLP…ERQHLQDLLH (872 aa)). A helical transmembrane segment spans residues 175-195 (IYTYVGSILIAINPFKFLPIY). An ATP-binding site is contributed by 239–246 (GESGSGKT). S755 is modified (phosphoserine). An actin-binding region spans residues 908 to 919 (QAEPYFVKCIRS). IQ domains follow at residues 1021–1041 (LRRI…QQFL), 1043–1072 (LRQA…EKDA), 1075–1104 (MASA…AAVI), 1116–1145 (RHKA…KIIL), and 1139–1168 (QRNK…EKLR). Residues 1022 to 1163 (RRIVLLQRWF…RARQRCNALK (142 aa)) are neck or regulatory domain. The segment at 1164–2505 (EEKLREAKLE…LKNVKNSPQK (1342 aa)) is tail. Over residues 1221-1240 (RESSMDFSKESPDKQQERGR) the composition is skewed to basic and acidic residues. The disordered stretch occupies residues 1221–1276 (RESSMDFSKESPDKQQERGRRQSGTDLQEDVIVRQRPKSLEDLHQKKVGRAKRESR). At S1243 the chain carries Phosphoserine. At T1245 the chain carries Phosphothreonine. S1259 carries the post-translational modification Phosphoserine. A coiled-coil region spans residues 1265-1292 (QKKVGRAKRESRRMRELEQAIFSLELLK). A compositionally biased stretch (basic residues) spans 1266–1276 (KKVGRAKRESR). Phosphoserine is present on residues S1300 and S1318. A disordered region spans residues 1342–1401 (KSKPESLILDEGELKISSPNTFTNPKSQDNALSASSETSSTLAGKGASSDSEHLKNGTAK). Over residues 1358–1371 (SSPNTFTNPKSQDN) the composition is skewed to polar residues. The segment covering 1372-1384 (ALSASSETSSTLA) has biased composition (low complexity). Positions 1391–1401 (DSEHLKNGTAK) are enriched in basic and acidic residues. The stretch at 1492–1539 (TVLKKLEKLNIEKEKRQKQLQQQNEKEMMEQIRQQTDILEKERKAFKT) forms a coiled coil. 4 disordered regions span residues 1650–1675 (RSTE…REGS), 1693–1727 (SGNP…SVDE), 1767–1793 (GKQG…PGPD), and 1806–1841 (QYHP…KRGV). Positions 1665-1675 (HRSDDPSREGS) are enriched in basic and acidic residues. The span at 1715-1726 (QQETSQRFSSVD) shows a compositional bias: polar residues. The span at 1821 to 1833 (CRKEFKENKEPSP) shows a compositional bias: basic and acidic residues. Position 1950 is a phosphoserine (S1950). 2 consecutive Phorbol-ester/DAG-type zinc fingers follow at residues 2001-2050 (GHIF…TAKC) and 2068-2119 (SRLT…DTDA). In terms of domain architecture, Rho-GAP spans 2065 to 2253 (VELSRLTSED…LIVVEQMNKY (189 aa)). Phosphoserine occurs at positions 2293 and 2296. Positions 2324-2360 (TDQQQAAMQQEEKVLTEQIENLQKEKEELTFEMLVLE) form a coiled coil. Residues 2361 to 2443 (PRASDDETLE…NTTSSHGTRK (83 aa)) are disordered. The segment covering 2377–2386 (TADSSENLNM) has biased composition (polar residues). Residues 2420 to 2438 (SLDSVSSSVSSCLSNTTSS) show a composition bias toward low complexity. Phosphoserine is present on S2458. Positions 2465–2530 (TEGPLGQAKS…TVDSDCSSTQ (66 aa)) are disordered.

It belongs to the TRAFAC class myosin-kinesin ATPase superfamily. Myosin family. Post-translationally, phosphorylated by ALPK1 following monosodium urate monohydrate (MSU)-induced inflammation. Expressed in the eye, lung, liver, brain, heart, kidney, skeletal muscle and spleen. No detection was found in liver. In the brain, expressed in the ependymal cells of the third ventricle and the aqueduct.

Its subcellular location is the membrane. The protein resides in the cytoplasm. It is found in the synapse. It localises to the cell projection. The protein localises to the growth cone. Myosins are actin-based motor molecules with ATPase activity. Unconventional myosins serve in intracellular movements. Regulates Rho by stimulating it's GTPase activity in neurons. Required for the regulation of neurite branching and motor neuron axon guidance. In Mus musculus (Mouse), this protein is Unconventional myosin-IXa (Myo9a).